We begin with the raw amino-acid sequence, 202 residues long: MDPQLPEPEPLIALIEALRRLPGVGVRSARRMAYHLLQHDLQGADMLGRALSGAVQHLRHCARCNSFTEDEVCATCANPKRDPGLLCIVETPADQNMIESSHGYRGLYYVLMGRIAPLEGVGPRELDFQRVIERACDGVVQEVILATNFTAEGETTAHFLGDALSERGLKVTRLARGVPAGSELEYVDAGTIAWALMERRST.

The C4-type zinc finger occupies 61–76 (CARCNSFTEDEVCATC). One can recognise a Toprim domain in the interval 84-179 (GLLCIVETPA…KVTRLARGVP (96 aa)).

This sequence belongs to the RecR family.

May play a role in DNA repair. It seems to be involved in an RecBC-independent recombinational process of DNA repair. It may act with RecF and RecO. This is Recombination protein RecR from Bordetella bronchiseptica (strain ATCC BAA-588 / NCTC 13252 / RB50) (Alcaligenes bronchisepticus).